The following is a 100-amino-acid chain: MELTPREKDKLLIFTAALLAERRRARGLKLNYPEAVALITAAIMEGARDGRTVAELMHEGTTVLSRDDVMDGVAEMIPEIQVEATFPDGTKLVTVHHPIV.

Belongs to the urease gamma subunit family. In terms of assembly, heterotrimer of UreA (gamma), UreB (beta) and UreC (alpha) subunits. Three heterotrimers associate to form the active enzyme.

Its subcellular location is the cytoplasm. It carries out the reaction urea + 2 H2O + H(+) = hydrogencarbonate + 2 NH4(+). Its pathway is nitrogen metabolism; urea degradation; CO(2) and NH(3) from urea (urease route): step 1/1. The sequence is that of Urease subunit gamma from Cupriavidus pinatubonensis (strain JMP 134 / LMG 1197) (Cupriavidus necator (strain JMP 134)).